A 278-amino-acid polypeptide reads, in one-letter code: Betaine--homocysteine S-methyltransferase 1 (278 aa).

Positions 11–278 constitute a Hcy-binding domain; it reads KGILERLNSG…FGLEPRVATR (268 aa). 3 positions are modified to N6-succinyllysine: K40, K93, and K98. C217 provides a ligand contact to Zn(2+). N6-succinyllysine is present on residues K232 and K241.

In terms of assembly, homotetramer. Zn(2+) serves as cofactor. As to expression, found exclusively in liver and kidney.

The protein resides in the cytoplasm. The protein localises to the cytosol. Its subcellular location is the nucleus. It carries out the reaction L-homocysteine + glycine betaine = N,N-dimethylglycine + L-methionine. It participates in amine and polyamine degradation; betaine degradation; sarcosine from betaine: step 1/2. The protein operates within amino-acid biosynthesis; L-methionine biosynthesis via de novo pathway; L-methionine from L-homocysteine (BhmT route): step 1/1. With respect to regulation, inhibited by dimethylglycine and methylthioacetate. In terms of biological role, involved in the regulation of homocysteine metabolism. Converts betaine and homocysteine to dimethylglycine and methionine, respectively. This reaction is also required for the irreversible oxidation of choline. The chain is Betaine--homocysteine S-methyltransferase 1 from Sus scrofa (Pig).